The chain runs to 182 residues: MNLSNHFLVAMPDMEDAFFSQSVVYICKHDEDGALGIAINKPSPITMDMIFSATGKNIPMRMQHDSVMMGGPVQVERGYVVHTPIGNWQSSIGVSDGIALTSSRDVLENISREGAVDKALISIGYSSWSKGQLERELADNAWLTVPADEHILFDIPYEHRYAAAFAKLGIDPLALFSGAGHA.

The protein belongs to the UPF0301 (AlgH) family.

In Neisseria gonorrhoeae (strain NCCP11945), this protein is UPF0301 protein NGK_1355.